The chain runs to 346 residues: Ribulose-5-phosphate reductase (346 aa).

Residues Cys45, His71, Glu72, and Glu151 each coordinate Zn(2+).

Belongs to the zinc-containing alcohol dehydrogenase family. It depends on Zn(2+) as a cofactor.

It carries out the reaction D-ribitol 5-phosphate + NADP(+) = D-ribulose 5-phosphate + NADPH + H(+). It participates in cell wall biogenesis; poly(ribitol phosphate) teichoic acid biosynthesis. Catalyzes the NADPH dependent reduction of D-ribulose 5-phosphate to D-ribitol 5-phosphate. In Streptococcus pneumoniae (strain ATCC BAA-255 / R6), this protein is Ribulose-5-phosphate reductase.